A 415-amino-acid chain; its full sequence is Probable N-acetyl-gamma-glutamyl-phosphate reductase, chloroplastic (415 aa).

A chloroplast-targeting transit peptide spans 1–74 (MGSTALGGGA…SGVKSGEEVR (74 aa)). Residues 48–68 (VRASVASSPQKQHSPKTSGVK) are disordered. Polar residues predominate over residues 56–67 (PQKQHSPKTSGV). The active site involves C219.

It belongs to the NAGSA dehydrogenase family. Type 1 subfamily. In terms of assembly, homotetramer.

It is found in the plastid. Its subcellular location is the chloroplast. It carries out the reaction N-acetyl-L-glutamate 5-semialdehyde + phosphate + NADP(+) = N-acetyl-L-glutamyl 5-phosphate + NADPH + H(+). It functions in the pathway amino-acid biosynthesis; L-arginine biosynthesis; N(2)-acetyl-L-ornithine from L-glutamate: step 3/4. The polypeptide is Probable N-acetyl-gamma-glutamyl-phosphate reductase, chloroplastic (Oryza sativa subsp. japonica (Rice)).